A 316-amino-acid chain; its full sequence is MIFFTLEHVLTHISLSIILIVITIFLMNLLVYEIEGLSYSSEKGMVASFLCITGLLVIRWIYSGHLPLSDLYESLMFLSWSFSIFYMIPYFRNKKSNLNVLTAPGTIFTQGFATSGVLREIHQSTILVPALQSQWLMMHVSMMVLSYAALLCGSLLSVALLVILFRKSSFTFSKYKGYYLPIGPLYFSEIQYVNEKKNIFLSFRNYHRYQLIQQLDCWSSRVISLGFLFLTIGILSGAVWANETWGSYWNWDPKETWAFITWTIFAIYLHTRTNKSLQSSNSAIVASIGFFIIWICYFGVNLLGIGLHSYGSFAIT.

The next 8 helical transmembrane spans lie at 12–32 (HISL…LLVY), 44–64 (GMVA…IYSG), 71–91 (LYES…IPYF), 98–118 (LNVL…SGVL), 145–165 (LSYA…VILF), 222–242 (VISL…VWAN), 256–270 (TWAF…IYLH), and 283–303 (AIVA…VNLL).

Belongs to the CcmF/CycK/Ccl1/NrfE/CcsA family. May interact with Ccs1.

It is found in the plastid. The protein resides in the chloroplast thylakoid membrane. Functionally, required during biogenesis of c-type cytochromes (cytochrome c6 and cytochrome f) at the step of heme attachment. The sequence is that of Cytochrome c biogenesis protein CcsA from Ranunculus macranthus (Large buttercup).